A 176-amino-acid polypeptide reads, in one-letter code: ATP synthase subunit b, chloroplastic (176 aa).

A helical membrane pass occupies residues 27–49; the sequence is ILNLAAVFALLAYVGTDFVSSLL.

Belongs to the ATPase B chain family. In terms of assembly, F-type ATPases have 2 components, F(1) - the catalytic core - and F(0) - the membrane proton channel. F(1) has five subunits: alpha(3), beta(3), gamma(1), delta(1), epsilon(1). F(0) has four main subunits: a(1), b(1), b'(1) and c(10-14). The alpha and beta chains form an alternating ring which encloses part of the gamma chain. F(1) is attached to F(0) by a central stalk formed by the gamma and epsilon chains, while a peripheral stalk is formed by the delta, b and b' chains.

It is found in the plastid. It localises to the chloroplast thylakoid membrane. Functionally, f(1)F(0) ATP synthase produces ATP from ADP in the presence of a proton or sodium gradient. F-type ATPases consist of two structural domains, F(1) containing the extramembraneous catalytic core and F(0) containing the membrane proton channel, linked together by a central stalk and a peripheral stalk. During catalysis, ATP synthesis in the catalytic domain of F(1) is coupled via a rotary mechanism of the central stalk subunits to proton translocation. Component of the F(0) channel, it forms part of the peripheral stalk, linking F(1) to F(0). The sequence is that of ATP synthase subunit b, chloroplastic from Nephroselmis olivacea (Green alga).